The chain runs to 551 residues: Calnexin (551 aa).

The first 23 residues, 1–23, serve as a signal peptide directing secretion; the sequence is MRPQNVAGVAGTGALIMAAGALA. At 24–477 the chain is on the lumenal side; that stretch reads DQTVFHPTSL…QAIKQMPEVA (454 aa). The disordered stretch occupies residues 293–315; that stretch reads EEEPETIPDPEAEKPEEWDDEED. Residues 478–498 form a helical membrane-spanning segment; sequence AGLAAAVFTLLGMLLALFGFI. Topologically, residues 499-551 are cytoplasmic; that stretch reads GSAPTKVKQTTVKTKAVAPVAPAGEEEKKALDQAGVEIPAEGSKKRVTRSTKE. The interval 526–551 is disordered; sequence KKALDQAGVEIPAEGSKKRVTRSTKE.

This sequence belongs to the calreticulin family.

It is found in the endoplasmic reticulum membrane. In terms of biological role, endoplasmic reticulum (ER) chaperone that functions to stabilize non-native glycoproteins and retain them in the ER until they are properly folded or targeted for ER associated degradation (ERAD). With co-chaperone DNJ1, coordinately maintains ER homeostasis and contributes to maintenance of cell wall architecture. This Cryptococcus neoformans var. grubii serotype A (strain H99 / ATCC 208821 / CBS 10515 / FGSC 9487) (Filobasidiella neoformans var. grubii) protein is Calnexin.